A 343-amino-acid chain; its full sequence is Ribosomal RNA small subunit methyltransferase C (343 aa).

It belongs to the methyltransferase superfamily. RsmC family. Monomer.

Its subcellular location is the cytoplasm. The enzyme catalyses guanosine(1207) in 16S rRNA + S-adenosyl-L-methionine = N(2)-methylguanosine(1207) in 16S rRNA + S-adenosyl-L-homocysteine + H(+). In terms of biological role, specifically methylates the guanine in position 1207 of 16S rRNA in the 30S particle. This is Ribosomal RNA small subunit methyltransferase C from Shigella flexneri serotype 5b (strain 8401).